Reading from the N-terminus, the 125-residue chain is Large ribosomal subunit protein bL12 (125 aa).

Belongs to the bacterial ribosomal protein bL12 family. As to quaternary structure, homodimer. Part of the ribosomal stalk of the 50S ribosomal subunit. Forms a multimeric L10(L12)X complex, where L10 forms an elongated spine to which 2 to 4 L12 dimers bind in a sequential fashion. Binds GTP-bound translation factors.

Functionally, forms part of the ribosomal stalk which helps the ribosome interact with GTP-bound translation factors. Is thus essential for accurate translation. This Campylobacter jejuni subsp. jejuni serotype O:6 (strain 81116 / NCTC 11828) protein is Large ribosomal subunit protein bL12.